Reading from the N-terminus, the 89-residue chain is Small ribosomal subunit protein uS14 (89 aa).

The protein belongs to the universal ribosomal protein uS14 family. In terms of assembly, part of the 30S ribosomal subunit. Contacts proteins S3 and S10.

Functionally, binds 16S rRNA, required for the assembly of 30S particles and may also be responsible for determining the conformation of the 16S rRNA at the A site. The polypeptide is Small ribosomal subunit protein uS14 (Aster yellows witches'-broom phytoplasma (strain AYWB)).